The sequence spans 108 residues: Large ribosomal subunit protein bL31B (108 aa).

Residues 81–108 are disordered; the sequence is KPAQPVQAPAEEGPVVKGKKKAPAKKKK. The span at 97–108 shows a compositional bias: basic residues; the sequence is KGKKKAPAKKKK.

This sequence belongs to the bacterial ribosomal protein bL31 family. Type B subfamily. As to quaternary structure, part of the 50S ribosomal subunit.

This is Large ribosomal subunit protein bL31B from Chlamydia caviae (strain ATCC VR-813 / DSM 19441 / 03DC25 / GPIC) (Chlamydophila caviae).